We begin with the raw amino-acid sequence, 194 residues long: Isopentenyl-diphosphate Delta-isomerase (194 aa).

Residues His35 and His42 each coordinate Mn(2+). The 135-residue stretch at Pro40–Asp174 folds into the Nudix hydrolase domain. Residue Cys77 is part of the active site. Residue His79 coordinates Mn(2+). Glu97 is a Mg(2+) binding site. Positions 124 and 126 each coordinate Mn(2+). Residue Glu126 is part of the active site.

The protein belongs to the IPP isomerase type 1 family. Requires Mg(2+) as cofactor. The cofactor is Mn(2+).

It localises to the cytoplasm. It carries out the reaction isopentenyl diphosphate = dimethylallyl diphosphate. The protein operates within isoprenoid biosynthesis; dimethylallyl diphosphate biosynthesis; dimethylallyl diphosphate from isopentenyl diphosphate: step 1/1. Functionally, catalyzes the 1,3-allylic rearrangement of the homoallylic substrate isopentenyl (IPP) to its highly electrophilic allylic isomer, dimethylallyl diphosphate (DMAPP). In Frankia alni (strain DSM 45986 / CECT 9034 / ACN14a), this protein is Isopentenyl-diphosphate Delta-isomerase.